A 696-amino-acid polypeptide reads, in one-letter code: Translation factor waclaw, mitochondrial (696 aa).

A mitochondrion-targeting transit peptide spans 1–76; the sequence is MIVGYSVFFH…RNLSTTNQVK (76 aa). Residues 97-278 form the tr-type G domain; it reads ERIRNFSIIA…RVIETVPPPQ (182 aa). GTP contacts are provided by residues 106–113, 171–175, and 225–228; these read AHVDHGKS, DTPGH, and NKID.

The protein belongs to the TRAFAC class translation factor GTPase superfamily. Classic translation factor GTPase family. LepA subfamily.

It localises to the mitochondrion inner membrane. The catalysed reaction is GTP + H2O = GDP + phosphate + H(+). Promotes mitochondrial protein synthesis. May act as a fidelity factor of the translation reaction, by catalyzing a one-codon backward translocation of tRNAs on improperly translocated ribosomes. Binds to mitochondrial ribosomes in a GTP-dependent manner. In Drosophila melanogaster (Fruit fly), this protein is Translation factor waclaw, mitochondrial.